The chain runs to 161 residues: ATP synthase subunit b (161 aa).

The helical transmembrane segment at 1 to 21 (MYLNATILGQVIAFILFVWFC) threads the bilayer.

Belongs to the ATPase B chain family. As to quaternary structure, F-type ATPases have 2 components, F(1) - the catalytic core - and F(0) - the membrane proton channel. F(1) has five subunits: alpha(3), beta(3), gamma(1), delta(1), epsilon(1). F(0) has three main subunits: a(1), b(2) and c(10-14). The alpha and beta chains form an alternating ring which encloses part of the gamma chain. F(1) is attached to F(0) by a central stalk formed by the gamma and epsilon chains, while a peripheral stalk is formed by the delta and b chains.

Its subcellular location is the cell inner membrane. F(1)F(0) ATP synthase produces ATP from ADP in the presence of a proton or sodium gradient. F-type ATPases consist of two structural domains, F(1) containing the extramembraneous catalytic core and F(0) containing the membrane proton channel, linked together by a central stalk and a peripheral stalk. During catalysis, ATP synthesis in the catalytic domain of F(1) is coupled via a rotary mechanism of the central stalk subunits to proton translocation. Functionally, component of the F(0) channel, it forms part of the peripheral stalk, linking F(1) to F(0). This is ATP synthase subunit b from Blochmanniella floridana.